A 44-amino-acid chain; its full sequence is uncharacterized protein (44 aa).

This is an uncharacterized protein from Bacillus subtilis (strain 168).